Consider the following 354-residue polypeptide: Protein RecA (354 aa).

Position 67–74 (67–74 (GPESSGKT)) interacts with ATP. The disordered stretch occupies residues 331–354 (GGANSSDSKTESDENIDLETGEVF). The segment covering 343–354 (DENIDLETGEVF) has biased composition (acidic residues).

Belongs to the RecA family.

It is found in the cytoplasm. Functionally, can catalyze the hydrolysis of ATP in the presence of single-stranded DNA, the ATP-dependent uptake of single-stranded DNA by duplex DNA, and the ATP-dependent hybridization of homologous single-stranded DNAs. It interacts with LexA causing its activation and leading to its autocatalytic cleavage. The sequence is that of Protein RecA from Shewanella frigidimarina (strain NCIMB 400).